Reading from the N-terminus, the 642-residue chain is Threonine--tRNA ligase (642 aa).

Residues 1–61 (MPVITLPDGS…ENDAQLSIIT (61 aa)) form the TGS domain. The tract at residues 243–534 (DHRKIGKQLD…LTEEFAGFFP (292 aa)) is catalytic. At Lys286 the chain carries N6-acetyllysine. Zn(2+)-binding residues include Cys334, His385, and His511.

Belongs to the class-II aminoacyl-tRNA synthetase family. Homodimer. The cofactor is Zn(2+).

Its subcellular location is the cytoplasm. It catalyses the reaction tRNA(Thr) + L-threonine + ATP = L-threonyl-tRNA(Thr) + AMP + diphosphate + H(+). Its function is as follows. Catalyzes the attachment of threonine to tRNA(Thr) in a two-step reaction: L-threonine is first activated by ATP to form Thr-AMP and then transferred to the acceptor end of tRNA(Thr). Also edits incorrectly charged L-seryl-tRNA(Thr). In Escherichia coli O157:H7, this protein is Threonine--tRNA ligase.